The primary structure comprises 328 residues: MRILSGMRPTGKLHIGHLVGALENWVKLQEEGNECFYFVADWHALTTHYDDVSKLKEYTRDLVRGFLACGIDPEKSVIFVQSGVKEHAELALLFSMIVSVSRLERVPTYKEIKSELNYKDLSTAGFLIYPVLQAADILIYKAEGVPVGEDQVYHIELTREIARRFNYLYDEVFPEPEAILSRVPKLPGTDGRKMSKSYGNIINLEISEKELEQTILRMMTDPARVRRSDPGNPENCPVWKYHQAFDISEEESKWVWEGCTTASIGCVDCKKLLLKNMKRKLAPIWENFRKIDEDPHYVDDVIMEGTKKAREVAAKTMEEVRRAMNLMF.

ATP is bound by residues Arg-8–Thr-10 and Gly-16–His-17. The short motif at Pro-9 to His-17 is the 'HIGH' region element. Asp-136 is a binding site for L-tryptophan. ATP is bound by residues Gly-148–Asp-150, Leu-186, and Lys-193–Ser-197. The 'KMSKS' region signature appears at Lys-193 to Ser-197.

This sequence belongs to the class-I aminoacyl-tRNA synthetase family. In terms of assembly, homodimer.

It is found in the cytoplasm. It carries out the reaction tRNA(Trp) + L-tryptophan + ATP = L-tryptophyl-tRNA(Trp) + AMP + diphosphate + H(+). Its function is as follows. Catalyzes the attachment of tryptophan to tRNA(Trp). This chain is Tryptophan--tRNA ligase, found in Thermotoga maritima (strain ATCC 43589 / DSM 3109 / JCM 10099 / NBRC 100826 / MSB8).